A 1467-amino-acid chain; its full sequence is MYSSSNSFLGGVNNARPGQPPFMQQPPYSQLPQGQQQIPQQTGFQPQPTGYGSQSASHLQPQPTGFPTGQLQPQFTGFPGAAPPQQQQQFGGYQAPAQQPQLTGYPPQSQPPSLQVPSTTGLPTRLAPRTSSEIANSFSDGAGVAPPPPPKSSGSKIPNIRLSFITAQDQAKFEQLFKSAVGDSQTMDGEKAKELLLRSRLPGSELSKIWVLSDTTKSGQLFFPEFALAMYLCNLRITGRELPSTLPDKIKNEVSGMVDIISFGVPDTEPQGAARTNVPSFDAPLLENKSAPPAPQHPKPQQPSNAQFLSQLAAQPTGFGPQATGLQPNQPSLLGANATLAPQTTGFPGQSQQQYLHSQPTGLMTNPQATGYNGPRPPLPPMPTGFGSNLSSMQTGGLAAQPTGIPGQWGFVNAPSSGLPNIEALKQQLMPQPGREGGFTTAGLSGNASIPWAITKEEKKIYDDLFRAWDGLHKGFIGGDTAIEIMGQSGLDRKDLERIWTLADPSNRGRLNMDEFAVAMHLIYRKLNGYPVPNRLPPELIPPSTRNLNDSIGAVKSLLSQDAESRKASGAFLQPQKTGVSYLKEHSFRGGARSPGFGRKDATLFKNNDEAAAGYRSSARRRVGNDARPSSPPTSQASEEELSVEQLKKKIRETQIMLDAVDFKDENRAEEDEVLDRRDRLEAESLMDRTRRVQDDIDTHPNAVFRKLDNGAERRSLRRQLQAFEDQVPQIASEVRRIEREIADAKLELFRLKDAKAHPNSAANIVGTGPGGTVTEADRIKARARARMQARAAELAGRPVPASVDDDGAAVRRLEAESASIRADREKNEAMTRDVEESVREFTRSLEDSLKEEGETSTREHERRRWEDALGVEDVIRDFIYDLQRGSRTAHIRKEEESRASAQEQRLRHEEPSPGVSRLSPAPSAGSAGSLPGSTHEDRVAAARERAQRRIAERMAAAGLKPHTDTSETLLQRQEREKREREERLRRAEEEDAKREQERQRRLAEEQRSTSDTPAKPVGKKPPPAPPSRRGRTDSAGQAEVKKAAEETITAEQAAREQAIREEQQAQEEETNRLEMEAQKREEELLKEKEAQEARLRALEEQVRQGKIRKQEEKRRKEEAERLAKEKEAALAAQRAEIERAKERERQLQLELERLDEESSSDDEGPVNITPEDSTPTQSQLLPTVTPAAPVSAPESEQAGSPEDTSSQAPPVDFKLETESKNPYFKITHQATDTQVVSSPPVPQPSFTSPKADVHSTNPFHRLAKQETSKPAFTGSAPLERKSRARPEADDDWSAAGSEFDSSDDDDDERPGGGSAKQLASILFGTMAPPRPLSAMDDKSPSKSSTPVQDSPVASLPVPESNGSLSAPAAPPPPPPPPPAAVPSYDPSVAPPPPPAPPMAPPAPPPGPPPPPGPLPPPAPPAASGPPTPAGAPDRSALLASIQKGKGLRKVQTNDRSTSSIAGRVLD.

Positions 1–157 are disordered; sequence MYSSSNSFLG…PPPKSSGSKI (157 aa). The span at 25-48 shows a compositional bias: low complexity; sequence QPPYSQLPQGQQQIPQQTGFQPQP. Residues 50–75 are compositionally biased toward polar residues; the sequence is GYGSQSASHLQPQPTGFPTGQLQPQF. Low complexity predominate over residues 77 to 101; it reads GFPGAAPPQQQQQFGGYQAPAQQPQ. Over residues 129–139 the composition is skewed to polar residues; the sequence is RTSSEIANSFS. The EH 1 domain occupies 169–257; the sequence is DQAKFEQLFK…DKIKNEVSGM (89 aa). The region spanning 201-236 is the EF-hand 1 domain; it reads LPGSELSKIWVLSDTTKSGQLFFPEFALAMYLCNLR. The segment at 266 to 376 is disordered; sequence PDTEPQGAAR…PQATGYNGPR (111 aa). A compositionally biased stretch (pro residues) spans 292–301; sequence PPAPQHPKPQ. Composition is skewed to polar residues over residues 305–314 and 340–370; these read NAQFLSQLAA and LAPQ…PQAT. Positions 458-547 constitute an EH 2 domain; that stretch reads EKKIYDDLFR…PELIPPSTRN (90 aa). Residues 491–526 enclose the EF-hand 2 domain; the sequence is LDRKDLERIWTLADPSNRGRLNMDEFAVAMHLIYRK. Disordered stretches follow at residues 613–643, 822–864, 888–1087, and 1101–1467; these read AGYR…EELS, RADR…HERR, RTAH…ELLK, and EQVR…RVLD. A coiled-coil region spans residues 634–758; sequence TSQASEEELS…LFRLKDAKAH (125 aa). A compositionally biased stretch (basic and acidic residues) spans 892–912; it reads IRKEEESRASAQEQRLRHEEP. Residues 919-934 are compositionally biased toward low complexity; it reads LSPAPSAGSAGSLPGS. 5 stretches are compositionally biased toward basic and acidic residues: residues 935 to 953, 973 to 1009, 1054 to 1087, 1101 to 1129, and 1136 to 1153; these read THED…RIAE, RQER…EQRS, AARE…ELLK, EQVR…EKEA, and AEIE…LELE. Residues 965–1162 adopt a coiled-coil conformation; that stretch reads DTSETLLQRQ…ERLDEESSSD (198 aa). Positions 1154–1165 are enriched in acidic residues; sequence RLDEESSSDDEG. The span at 1171–1182 shows a compositional bias: polar residues; it reads PEDSTPTQSQLL. The segment covering 1183 to 1197 has biased composition (low complexity); sequence PTVTPAAPVSAPESE. Basic and acidic residues predominate over residues 1279-1288; that stretch reads LERKSRARPE. 2 stretches are compositionally biased toward pro residues: residues 1369 to 1381 and 1389 to 1430; these read AAPP…PPAA and VAPP…PTPA. A WH2 domain is found at 1434–1451; that stretch reads DRSALLASIQKGKGLRKV.

Belongs to the PAN1 family. As to quaternary structure, component of the PAN1 actin cytoskeleton-regulatory complex.

The protein localises to the cell membrane. Its subcellular location is the endosome membrane. It localises to the cytoplasm. The protein resides in the cytoskeleton. It is found in the actin patch. In terms of biological role, component of the PAN1 actin cytoskeleton-regulatory complex required for the internalization of endosomes during actin-coupled endocytosis. The complex links the site of endocytosis to the cell membrane-associated actin cytoskeleton. Mediates uptake of external molecules and vacuolar degradation of plasma membrane proteins. Plays a role in the proper organization of the cell membrane-associated actin cytoskeleton and promotes its destabilization. This is Actin cytoskeleton-regulatory complex protein pan1 (pan1) from Aspergillus fumigatus (strain ATCC MYA-4609 / CBS 101355 / FGSC A1100 / Af293) (Neosartorya fumigata).